An 88-amino-acid polypeptide reads, in one-letter code: Large ribosomal subunit protein bL27 (88 aa).

The interval 1-25 (MAHKKGASSSSNGRDSEAKRLGVKR) is disordered.

This sequence belongs to the bacterial ribosomal protein bL27 family.

This is Large ribosomal subunit protein bL27 from Corynebacterium diphtheriae (strain ATCC 700971 / NCTC 13129 / Biotype gravis).